The primary structure comprises 306 residues: Mitochondrial 2-oxoglutarate/malate carrier protein (306 aa).

Solcar repeat units lie at residues 7–95, 103–194, and 203–292; these read VPNV…LLER, LSFG…AKQA, and DGIF…MNAA. 6 helical membrane-spanning segments follow: residues 9–38, 72–93, 108–122, 172–192, 205–226, and 268–286; these read NVVK…NRMQ, SAGL…AFLL, KAVL…GSFV, PTVL…SQAK, IFCH…SMPV, and FTPY…FIIL.

The protein belongs to the mitochondrial carrier (TC 2.A.29) family. In terms of assembly, interacts with ant-1.1 and ced-9. Ubiquitously expressed, but highly expressed in the anterior pharynx.

It is found in the mitochondrion. The protein resides in the mitochondrion inner membrane. It carries out the reaction (S)-malate(in) + 2-oxoglutarate(out) = (S)-malate(out) + 2-oxoglutarate(in). The enzyme catalyses malonate(in) + 2-oxoglutarate(out) = malonate(out) + 2-oxoglutarate(in). It catalyses the reaction succinate(in) + 2-oxoglutarate(out) = succinate(out) + 2-oxoglutarate(in). The catalysed reaction is maleate(in) + 2-oxoglutarate(out) = maleate(out) + 2-oxoglutarate(in). It carries out the reaction oxaloacetate(in) + 2-oxoglutarate(out) = oxaloacetate(out) + 2-oxoglutarate(in). In terms of biological role, catalyzes the transport of 2-oxoglutarate (alpha-oxoglutarate) across the inner mitochondrial membrane in an electroneutral exchange for malate. Can also exchange 2-oxoglutarate for other dicarboxylic acids such as malonate, succinate, maleate and oxaloacetate, although with lower affinity. Contributes to several metabolic processes, including the malate-aspartate shuttle, the oxoglutarate/isocitrate shuttle, in gluconeogenesis from lactate, and in nitrogen metabolism. Maintains mitochondrial fusion and fission events, and the organization and morphology of cristae. Regulator of apoptosis, insulin secretion and germline proliferation. Furthermore, plays a role in the oxidative stress response regulating endogenous levels of reactive oxygen species (ROS). Involved in the regulation of lin-35/Rb-mediated apoptosis in the germline. In Caenorhabditis elegans, this protein is Mitochondrial 2-oxoglutarate/malate carrier protein.